Reading from the N-terminus, the 118-residue chain is Ribulose bisphosphate carboxylase small subunit (118 aa).

Belongs to the RuBisCO small chain family. Heterohexadecamer of 8 large and 8 small subunits.

RuBisCO catalyzes two reactions: the carboxylation of D-ribulose 1,5-bisphosphate, the primary event in carbon dioxide fixation, as well as the oxidative fragmentation of the pentose substrate. Both reactions occur simultaneously and in competition at the same active site. Although the small subunit is not catalytic it is essential for maximal activity. The polypeptide is Ribulose bisphosphate carboxylase small subunit (Rhodobacter capsulatus (Rhodopseudomonas capsulata)).